The chain runs to 250 residues: UDP-2,3-diacylglucosamine hydrolase (250 aa).

Mn(2+) is bound by residues aspartate 8, histidine 10, aspartate 41, asparagine 79, and histidine 114. Substrate is bound at residue 79–80 (NR). Substrate contacts are provided by aspartate 122, serine 160, aspartate 172, glutamine 175, and histidine 203. Mn(2+) is bound by residues histidine 203 and histidine 205.

It belongs to the LpxH family. Mn(2+) is required as a cofactor.

The protein resides in the cell inner membrane. The enzyme catalyses UDP-2-N,3-O-bis[(3R)-3-hydroxytetradecanoyl]-alpha-D-glucosamine + H2O = 2-N,3-O-bis[(3R)-3-hydroxytetradecanoyl]-alpha-D-glucosaminyl 1-phosphate + UMP + 2 H(+). It participates in glycolipid biosynthesis; lipid IV(A) biosynthesis; lipid IV(A) from (3R)-3-hydroxytetradecanoyl-[acyl-carrier-protein] and UDP-N-acetyl-alpha-D-glucosamine: step 4/6. Functionally, hydrolyzes the pyrophosphate bond of UDP-2,3-diacylglucosamine to yield 2,3-diacylglucosamine 1-phosphate (lipid X) and UMP by catalyzing the attack of water at the alpha-P atom. Involved in the biosynthesis of lipid A, a phosphorylated glycolipid that anchors the lipopolysaccharide to the outer membrane of the cell. The chain is UDP-2,3-diacylglucosamine hydrolase from Xylella fastidiosa (strain M23).